The primary structure comprises 958 residues: UvrABC system protein A (958 aa).

Residues 1–232 form the ABC transporter 1 domain; the sequence is MQSKSIKIQG…IETALKLGEG (232 aa). Residue 33–40 coordinates ATP; it reads GLSGSGKS. The C4-type zinc finger occupies 252–279; the sequence is CPICGFSIGELEPRLFSFNSPFGACPSC. ABC transporter domains are found at residues 315 to 593 and 604 to 935; these read QYYP…KYLS and RRKP…GKYL. 639-646 contributes to the ATP binding site; that stretch reads GVSGSGKS. A C4-type zinc finger spans residues 738–764; the sequence is CEACRGDGILKIEMHFLPDVYVPCEVC.

Belongs to the ABC transporter superfamily. UvrA family. In terms of assembly, forms a heterotetramer with UvrB during the search for lesions.

Its subcellular location is the cytoplasm. The UvrABC repair system catalyzes the recognition and processing of DNA lesions. UvrA is an ATPase and a DNA-binding protein. A damage recognition complex composed of 2 UvrA and 2 UvrB subunits scans DNA for abnormalities. When the presence of a lesion has been verified by UvrB, the UvrA molecules dissociate. This chain is UvrABC system protein A, found in Oceanobacillus iheyensis (strain DSM 14371 / CIP 107618 / JCM 11309 / KCTC 3954 / HTE831).